A 221-amino-acid chain; its full sequence is Small ribosomal subunit protein uS3 (221 aa).

Residues 39–108 (IRKFVKKELF…NVLINIVEVK (70 aa)) enclose the KH type-2 domain.

The protein belongs to the universal ribosomal protein uS3 family. As to quaternary structure, part of the 30S ribosomal subunit. Forms a tight complex with proteins S10 and S14.

Binds the lower part of the 30S subunit head. Binds mRNA in the 70S ribosome, positioning it for translation. The chain is Small ribosomal subunit protein uS3 from Clostridium beijerinckii (strain ATCC 51743 / NCIMB 8052) (Clostridium acetobutylicum).